We begin with the raw amino-acid sequence, 176 residues long: Large ribosomal subunit protein uL22z (176 aa).

The segment covering 154 to 163 has biased composition (basic and acidic residues); the sequence is KEEPVKKEPE. A disordered region spans residues 154–176; sequence KEEPVKKEPETQLAAKSKKGASS.

This sequence belongs to the universal ribosomal protein uL22 family.

In Arabidopsis thaliana (Mouse-ear cress), this protein is Large ribosomal subunit protein uL22z (RPL17A).